Consider the following 175-residue polypeptide: NADH-ubiquinone oxidoreductase chain 6 (175 aa).

5 helical membrane-spanning segments follow: residues 1 to 21 (MMTYIVFILSIIFVISFVGFS), 25 to 45 (SPIYGGLVLIISGAVGCGIVL), 47 to 67 (FGGSFLGLMVFLIYLGGMLVV), 88 to 108 (AVLGAFVMGLLSELLLACYIL), and 149 to 169 (YGTWLVIVTGWSLFIGVLVIM).

Belongs to the complex I subunit 6 family. In terms of assembly, core subunit of respiratory chain NADH dehydrogenase (Complex I) which is composed of 45 different subunits.

It localises to the mitochondrion inner membrane. It catalyses the reaction a ubiquinone + NADH + 5 H(+)(in) = a ubiquinol + NAD(+) + 4 H(+)(out). Core subunit of the mitochondrial membrane respiratory chain NADH dehydrogenase (Complex I) which catalyzes electron transfer from NADH through the respiratory chain, using ubiquinone as an electron acceptor. Essential for the catalytic activity and assembly of complex I. The protein is NADH-ubiquinone oxidoreductase chain 6 (MT-ND6) of Halichoerus grypus (Gray seal).